A 431-amino-acid polypeptide reads, in one-letter code: Tyrosine--tRNA ligase (431 aa).

Tyr-34 provides a ligand contact to L-tyrosine. The short motif at 39 to 48 (PTADSLHIGH) is the 'HIGH' region element. L-tyrosine-binding residues include Tyr-171 and Gln-175. Residues 231–235 (KFGKT) carry the 'KMSKS' region motif. Lys-234 contacts ATP. Residues 353–422 (INVVEALVKT…GKYTILRRGK (70 aa)) form the S4 RNA-binding domain.

Belongs to the class-I aminoacyl-tRNA synthetase family. TyrS type 1 subfamily. In terms of assembly, homodimer.

The protein localises to the cytoplasm. The catalysed reaction is tRNA(Tyr) + L-tyrosine + ATP = L-tyrosyl-tRNA(Tyr) + AMP + diphosphate + H(+). In terms of biological role, catalyzes the attachment of tyrosine to tRNA(Tyr) in a two-step reaction: tyrosine is first activated by ATP to form Tyr-AMP and then transferred to the acceptor end of tRNA(Tyr). In Neisseria meningitidis serogroup C / serotype 2a (strain ATCC 700532 / DSM 15464 / FAM18), this protein is Tyrosine--tRNA ligase.